The primary structure comprises 347 residues: uncharacterized protein (347 aa).

This is an uncharacterized protein from Magallana gigas (Pacific oyster).